A 208-amino-acid polypeptide reads, in one-letter code: MKVVEVKHPLVRHKIGLMREGDVSTKRFRELAAEVGSLLTYEATADFETEKVTIEGWNGPVEVEQIKGKKVTVVPILRAGLGMMDGVLEHVPSARISVVGMYRDEETLEPVPYFEKLASNMPERMALVVDPMLATGGSMISTIDLLKDRGCTSIKALVLVAAPEGVAALEKAHPDVELYTASIDDCLNEQGYILPGLGDAGDKIFGTK.

Residues Arg78, Arg103, and 130 to 138 contribute to the 5-phospho-alpha-D-ribose 1-diphosphate site; that span reads DPMLATGGS. Residues Ile193 and 198–200 contribute to the uracil site; that span reads GDA. Asp199 provides a ligand contact to 5-phospho-alpha-D-ribose 1-diphosphate.

This sequence belongs to the UPRTase family. Requires Mg(2+) as cofactor.

The enzyme catalyses UMP + diphosphate = 5-phospho-alpha-D-ribose 1-diphosphate + uracil. It participates in pyrimidine metabolism; UMP biosynthesis via salvage pathway; UMP from uracil: step 1/1. Its activity is regulated as follows. Allosterically activated by GTP. Functionally, catalyzes the conversion of uracil and 5-phospho-alpha-D-ribose 1-diphosphate (PRPP) to UMP and diphosphate. The chain is Uracil phosphoribosyltransferase from Shewanella piezotolerans (strain WP3 / JCM 13877).